Reading from the N-terminus, the 618-residue chain is Putative ATP-dependent DNA helicase Q1 (618 aa).

The Helicase ATP-binding domain maps to 95 to 270 (INAVMSKEDA…KKMLGIPVAI (176 aa)). Position 108–115 (108–115 (LSTGGGKS)) interacts with ATP. Positions 214–217 (DEVH) match the DEVH box motif. The region spanning 295–443 (CVEKIVRTIK…NLYNMVRYAS (149 aa)) is the Helicase C-terminal domain. Zn(2+) contacts are provided by C448, C466, C470, and C473. The disordered stretch occupies residues 586-618 (KGRAEENNRKRKAAVTSSDEEVDVGDDDDVITL). Residues 603–618 (SDEEVDVGDDDDVITL) show a composition bias toward acidic residues.

This sequence belongs to the helicase family. RecQ subfamily. The cofactor is Zn(2+).

It localises to the nucleus. The enzyme catalyses Couples ATP hydrolysis with the unwinding of duplex DNA by translocating in the 3'-5' direction.. It carries out the reaction ATP + H2O = ADP + phosphate + H(+). Functionally, DNA helicase that may play a role in the repair of DNA that is damaged by ultraviolet light or other mutagens. Exhibits a magnesium-dependent ATP-dependent DNA-helicase activity that unwinds single- and double-stranded DNA in a 3'-5' direction. This is Putative ATP-dependent DNA helicase Q1 from Caenorhabditis briggsae.